We begin with the raw amino-acid sequence, 125 residues long: Small ribosomal subunit protein uS13 (125 aa).

Residues 93–125 (RAGLPVRGQRTRTNARTRRGARKTVAGKKKATR) form a disordered region. Positions 101-125 (QRTRTNARTRRGARKTVAGKKKATR) are enriched in basic residues.

The protein belongs to the universal ribosomal protein uS13 family. As to quaternary structure, part of the 30S ribosomal subunit. Forms a loose heterodimer with protein S19. Forms two bridges to the 50S subunit in the 70S ribosome.

Functionally, located at the top of the head of the 30S subunit, it contacts several helices of the 16S rRNA. In the 70S ribosome it contacts the 23S rRNA (bridge B1a) and protein L5 of the 50S subunit (bridge B1b), connecting the 2 subunits; these bridges are implicated in subunit movement. Contacts the tRNAs in the A and P-sites. This is Small ribosomal subunit protein uS13 from Synechococcus elongatus (strain ATCC 33912 / PCC 7942 / FACHB-805) (Anacystis nidulans R2).